A 1141-amino-acid chain; its full sequence is Serine-aspartate repeat-containing protein E (1141 aa).

Positions 1–52 (MINRDNKKAITKKGMISNRLNKFSIRKYTVGTASILVGTTLIFGLGNQEAKA) are cleaved as a signal peptide. Positions 23–34 (FSIRKYTVGTAS) match the YSIRK-G/S signaling motif motif. The interval 53–601 (AENTSTENAK…GDGTVKPEEK (549 aa)) is ligand binding A region. Residues 54–248 (ENTSTENAKQ…RSTKPVATAP (195 aa)) are disordered. Basic and acidic residues predominate over residues 61–75 (AKQDDATTSDNKEVV). Positions 77–90 (ETENNSTTENDSTN) are enriched in low complexity. Over residues 92–108 (IKKETNTDSQPEAKEES) the composition is skewed to basic and acidic residues. Residues 109-126 (TTSSTQQQQNNVTATTET) are compositionally biased toward low complexity. The span at 130 to 145 (NIEKENVKPSTDKTAT) shows a compositional bias: basic and acidic residues. Positions 159-207 (NYTNNDVTTKPSTSEIQTKPTTPQESTNIENSQPQPTPSKVDNQVTDAT) are enriched in polar residues. Positions 216-241 (SKEELKNNPEKLKELVRNDNNTDRST) are enriched in basic and acidic residues. CNA-B domains lie at 602 to 714 (LYKI…YKEP), 715 to 824 (KYNL…YKTP), and 825 to 935 (KYSL…EEDT). The tract at residues 929-1117 (GYFEEDTSDS…GSENNGSNNA (189 aa)) is disordered. The segment covering 930 to 1080 (YFEEDTSDSD…DSDSDSDSDS (151 aa)) has biased composition (acidic residues). Positions 1104 to 1108 (LPETG) match the LPXTG sorting signal motif. Pentaglycyl murein peptidoglycan amidated threonine is present on T1107. Residues 1108–1141 (GSENNGSNNATLFGGLFAALGSLLLFGRRKKQNK) constitute a propeptide, removed by sortase.

It belongs to the serine-aspartate repeat-containing protein (SDr) family. In terms of assembly, interacts with host complement factor H/CFAH (via C-terminus). Interacts with host complement regulator C4BPA.

It is found in the secreted. Its subcellular location is the cell wall. Its function is as follows. Cell surface-associated calcium-binding protein which plays an important role in adhesion and pathogenesis. Contributes to the resistance to killing by innate immune components in blood and thus attenuates bacterial clearance by interacting with host complement factor H/CFAH and modulating its activity. Inhibits also bacterial opsonization and killing by interacting with host complement regulator C4BPA and thus inhibiting classical complement pathway activation. This is Serine-aspartate repeat-containing protein E (sdrE) from Staphylococcus aureus (strain Mu50 / ATCC 700699).